An 82-amino-acid chain; its full sequence is Myosin light chain alkali (82 aa).

In terms of domain architecture, EF-hand spans 7 to 42 (GCYEDFIECLKLYDKEENGTMMLAELQHALLALGES).

In terms of assembly, myosin is a hexamer of 2 heavy chains and 4 light chains.

In Drosophila mauritiana (Fruit fly), this protein is Myosin light chain alkali (Mlc1).